A 131-amino-acid polypeptide reads, in one-letter code: Large-conductance mechanosensitive channel (131 aa).

3 consecutive transmembrane segments (helical) span residues Ile-14 to Leu-34, Ile-38 to Thr-58, and Gly-67 to Ile-87.

The protein belongs to the MscL family. Homopentamer.

The protein resides in the cell membrane. Functionally, channel that opens in response to stretch forces in the membrane lipid bilayer. May participate in the regulation of osmotic pressure changes within the cell. The polypeptide is Large-conductance mechanosensitive channel (Bacillus velezensis (strain DSM 23117 / BGSC 10A6 / LMG 26770 / FZB42) (Bacillus amyloliquefaciens subsp. plantarum)).